A 236-amino-acid chain; its full sequence is Ribose-5-phosphate isomerase A (236 aa).

Substrate is bound by residues 31–34, 84–87, and 97–100; these read TGST, DGAD, and KGGG. The Proton acceptor role is filled by Glu-106. A substrate-binding site is contributed by Lys-124.

The protein belongs to the ribose 5-phosphate isomerase family. As to quaternary structure, homodimer.

It catalyses the reaction aldehydo-D-ribose 5-phosphate = D-ribulose 5-phosphate. It functions in the pathway carbohydrate degradation; pentose phosphate pathway; D-ribose 5-phosphate from D-ribulose 5-phosphate (non-oxidative stage): step 1/1. Functionally, catalyzes the reversible conversion of ribose-5-phosphate to ribulose 5-phosphate. This is Ribose-5-phosphate isomerase A from Polynucleobacter asymbioticus (strain DSM 18221 / CIP 109841 / QLW-P1DMWA-1) (Polynucleobacter necessarius subsp. asymbioticus).